The chain runs to 71 residues: Small ribosomal subunit protein bS21 (71 aa).

This sequence belongs to the bacterial ribosomal protein bS21 family.

This Psychromonas ingrahamii (strain DSM 17664 / CCUG 51855 / 37) protein is Small ribosomal subunit protein bS21.